The sequence spans 128 residues: Holin-like protein CidA (128 aa).

A run of 4 helical transmembrane segments spans residues 4 to 24 (LLLTVIQIALLFIFARLINWV), 26 to 46 (ALLHINIPGSIIGIVILFTLL), 59 to 79 (GAAWLLGELLLFFIPSAVGVI), and 88 to 108 (FGVSILLVVIISTFVVMVSTG).

It belongs to the CidA/LrgA family. CidA subfamily.

It is found in the cell membrane. In terms of biological role, increases the activity of extracellular murein hydrolases possibly by mediating their export via hole formation. Inhibited by the antiholin-like proteins LrgAB. In an unstressed cell, the LrgAB products probably inhibit the function of the CidA protein. When a cell is stressed by the addition of antibiotics or by other factors in the environment, CidA possibly oligomerizes within the bacterial cell membrane, creating lesions that disrupt the proton motive force, which in turn results in loss of cell viability. These lesions are also hypothesized to regulate the subsequent cell lysis by either allowing the murein hydrolases access to the cell wall substrate and/or regulating their activity by a possible change in the cell wall pH that results from loss of membrane potential. In Bacillus subtilis (strain 168), this protein is Holin-like protein CidA.